The following is a 124-amino-acid chain: Fluoride-specific ion channel FluC 1 (124 aa).

Helical transmembrane passes span 4 to 24 (VLIG…GAWI), 36 to 56 (GTFA…GLVV), 67 to 87 (VVLG…LLDL), and 103 to 123 (AALS…LGWG). Na(+)-binding residues include G75 and T78.

The protein belongs to the fluoride channel Fluc/FEX (TC 1.A.43) family.

Its subcellular location is the cell membrane. The catalysed reaction is fluoride(in) = fluoride(out). Its activity is regulated as follows. Na(+) is not transported, but it plays an essential structural role and its presence is essential for fluoride channel function. In terms of biological role, fluoride-specific ion channel. Important for reducing fluoride concentration in the cell, thus reducing its toxicity. In Symbiobacterium thermophilum (strain DSM 24528 / JCM 14929 / IAM 14863 / T), this protein is Fluoride-specific ion channel FluC 1.